A 546-amino-acid chain; its full sequence is Chaperonin GroEL (546 aa).

ATP-binding positions include 30-33, Lys-51, 87-91, Gly-415, and Asp-495; these read TLGP and DGTTT.

It belongs to the chaperonin (HSP60) family. As to quaternary structure, forms a cylinder of 14 subunits composed of two heptameric rings stacked back-to-back. Interacts with the co-chaperonin GroES.

It localises to the cytoplasm. The catalysed reaction is ATP + H2O + a folded polypeptide = ADP + phosphate + an unfolded polypeptide.. In terms of biological role, together with its co-chaperonin GroES, plays an essential role in assisting protein folding. The GroEL-GroES system forms a nano-cage that allows encapsulation of the non-native substrate proteins and provides a physical environment optimized to promote and accelerate protein folding. This Brucella anthropi (strain ATCC 49188 / DSM 6882 / CCUG 24695 / JCM 21032 / LMG 3331 / NBRC 15819 / NCTC 12168 / Alc 37) (Ochrobactrum anthropi) protein is Chaperonin GroEL.